Reading from the N-terminus, the 234-residue chain is Large ribosomal subunit protein uL1 (234 aa).

The protein belongs to the universal ribosomal protein uL1 family. As to quaternary structure, part of the 50S ribosomal subunit.

In terms of biological role, binds directly to 23S rRNA. The L1 stalk is quite mobile in the ribosome, and is involved in E site tRNA release. Protein L1 is also a translational repressor protein, it controls the translation of the L11 operon by binding to its mRNA. The protein is Large ribosomal subunit protein uL1 of Salmonella agona (strain SL483).